The chain runs to 119 residues: uncharacterized protein (119 aa).

Positions 1-22 are disordered; it reads MQGQAGKRKTDGKVPSNTEQNC.

This is an uncharacterized protein from Saccharomyces cerevisiae (strain ATCC 204508 / S288c) (Baker's yeast).